A 253-amino-acid chain; its full sequence is 3-dehydroquinate dehydratase (253 aa).

Residues 46–48 (EWR) and Arg-82 each bind 3-dehydroquinate. The active-site Proton donor/acceptor is His-143. Residue Lys-170 is the Schiff-base intermediate with substrate of the active site. 3-dehydroquinate is bound by residues Arg-213, Ser-232, and Gln-236.

Belongs to the type-I 3-dehydroquinase family. Homodimer.

The enzyme catalyses 3-dehydroquinate = 3-dehydroshikimate + H2O. The protein operates within metabolic intermediate biosynthesis; chorismate biosynthesis; chorismate from D-erythrose 4-phosphate and phosphoenolpyruvate: step 3/7. Its activity is regulated as follows. Inhibited by flavonoids such as datiscetin, naringenin, marein and phloretin. In terms of biological role, involved in the third step of the chorismate pathway, which leads to the biosynthesis of aromatic amino acids (AroAA). Catalyzes the cis-dehydration of 3-dehydroquinate (DHQ) and introduces the first double bond of the aromatic ring to yield 3-dehydroshikimate. The reaction involves the formation of an imine intermediate between the keto group of 3-dehydroquinate and the epsilon-amino group of Lys-170 at the active site. This is 3-dehydroquinate dehydratase from Enterococcus faecalis (strain ATCC 700802 / V583).